Reading from the N-terminus, the 332-residue chain is Palmitoyltransferase ZDHHC15B (332 aa).

Over 1-14 (MALSRALRCCQRIF) the chain is Cytoplasmic. Residues 15-35 (SWIPVIIISSVVLWSYYAYVF) form a helical membrane-spanning segment. Over 36 to 50 (ELCFVTLSNNLERVT) the chain is Lumenal. The helical transmembrane segment at 51-71 (YLLIFHVCFIMFCWTYWKAIF) threads the bilayer. Residues 72–166 (TPPSTPTKKF…NNCVGFSNYK (95 aa)) are Cytoplasmic-facing. The 51-residue stretch at 123 to 173 (RFCDRCQVIKPDRCHHCSVCETCVLKMDHHCPWVNNCVGFSNYKFFLLFLS) folds into the DHHC domain. Zn(2+) is bound by residues C125 and C128. K132 contacts substrate. Residues H138, C139, C142, C145, and H152 each contribute to the Zn(2+) site. C153 acts as the S-palmitoyl cysteine intermediate in catalysis. C159 is a binding site for Zn(2+). Residues 167 to 187 (FFLLFLSYSMIYCVFIASTVF) traverse the membrane as a helical segment. At 188–204 (QYFLKFWVGDLPNGPAK) the chain is on the lumenal side. The chain crosses the membrane as a helical span at residues 205-228 (FHVLFLLFVALMFFVSLMFLFGYH). Residues 229 to 332 (CWLVAKNRST…GSSLLIRTES (104 aa)) are Cytoplasmic-facing. The tract at residues 305–332 (EEKWVEDGGSDEESADENGSSLLIRTES) is disordered.

The protein belongs to the DHHC palmitoyltransferase family. In terms of processing, autopalmitoylated (in vitro).

The protein localises to the golgi apparatus membrane. It is found in the postsynaptic density. It catalyses the reaction L-cysteinyl-[protein] + hexadecanoyl-CoA = S-hexadecanoyl-L-cysteinyl-[protein] + CoA. The catalysed reaction is L-cysteinyl-[protein] + tetradecanoyl-CoA = S-tetradecanoyl-L-cysteinyl-[protein] + CoA. The enzyme catalyses L-cysteinyl-[protein] + octadecanoyl-CoA = S-octadecanoyl-L-cysteinyl-[protein] + CoA. Functionally, palmitoyltransferase that catalyzes the addition of palmitate onto various protein substrates. Has no stringent fatty acid selectivity and in addition to palmitate can also transfer onto target proteins myristate from tetradecanoyl-CoA and stearate from octadecanoyl-CoA. May thereby regulate target proteins association and localization to membranes. In the nervous system, probably catalyzes the palmitoylation of synaptic proteins and is involved in the differentiation of dopaminergic neurons and the development of the diencephalon. The sequence is that of Palmitoyltransferase ZDHHC15B (zdhhc15b) from Danio rerio (Zebrafish).